Reading from the N-terminus, the 181-residue chain is Adenine phosphoribosyltransferase (181 aa).

The protein belongs to the purine/pyrimidine phosphoribosyltransferase family. In terms of assembly, homodimer.

The protein resides in the cytoplasm. The enzyme catalyses AMP + diphosphate = 5-phospho-alpha-D-ribose 1-diphosphate + adenine. It functions in the pathway purine metabolism; AMP biosynthesis via salvage pathway; AMP from adenine: step 1/1. Catalyzes a salvage reaction resulting in the formation of AMP, that is energically less costly than de novo synthesis. In Mesorhizobium japonicum (strain LMG 29417 / CECT 9101 / MAFF 303099) (Mesorhizobium loti (strain MAFF 303099)), this protein is Adenine phosphoribosyltransferase.